The primary structure comprises 195 residues: Imidazoleglycerol-phosphate dehydratase (195 aa).

This sequence belongs to the imidazoleglycerol-phosphate dehydratase family.

The protein localises to the cytoplasm. The enzyme catalyses D-erythro-1-(imidazol-4-yl)glycerol 3-phosphate = 3-(imidazol-4-yl)-2-oxopropyl phosphate + H2O. It participates in amino-acid biosynthesis; L-histidine biosynthesis; L-histidine from 5-phospho-alpha-D-ribose 1-diphosphate: step 6/9. This Cupriavidus metallidurans (strain ATCC 43123 / DSM 2839 / NBRC 102507 / CH34) (Ralstonia metallidurans) protein is Imidazoleglycerol-phosphate dehydratase.